The primary structure comprises 184 residues: Peptidoglycan-recognition protein SC2 (184 aa).

Residues 1-20 form the signal peptide; that stretch reads MANKALILLAVLFCAQAVLG. An N-acetylmuramoyl-L-alanine amidase domain is found at 45-169; it reads SYAVIHHTAG…RQVGSTECPG (125 aa). Residue H50 participates in Zn(2+) binding. The cysteines at positions 57 and 63 are disulfide-linked. Zn(2+) is bound by residues H159 and C167.

This sequence belongs to the N-acetylmuramoyl-L-alanine amidase 2 family. Requires Zn(2+) as cofactor. Constitutively expressed at high level in gut, in addition to the induced expression in fat body.

The protein resides in the secreted. It carries out the reaction Hydrolyzes the link between N-acetylmuramoyl residues and L-amino acid residues in certain cell-wall glycopeptides.. N-acetylmuramyl-L-alanine amidase involved in innate immunity by degrading bacterial peptidoglycans (PGN). Probably plays a scavenger role by digesting biologically active PGN into biologically inactive fragments. Has no direct bacteriolytic activity. This Drosophila melanogaster (Fruit fly) protein is Peptidoglycan-recognition protein SC2 (PGRP-SC2).